The primary structure comprises 223 residues: MARRPGSSSRGPARSDRLPAEAVTSARKPHAAAPTPPASPDPGLVLLGEFGRPHGLHGEVRLKSHTSEPLAIAGYGPLHASDGRTLELANVRPAAGSSPDLLIVRVKGVDDRTGAEALNRVTLAIARERLGKVEDEDEFFLTDLIGLTVEDGAGTVIGTIVAVPNFGGGDLLEIRPAAGGPTALLPFTKAFVPSLDIAGGKVVADPPDDLFAPPGPKPADDPG.

The span at 1 to 12 (MARRPGSSSRGP) shows a compositional bias: low complexity. Disordered regions lie at residues 1–44 (MARR…DPGL) and 204–223 (ADPP…DDPG). Positions 136 to 210 (EDEFFLTDLI…KVVADPPDDL (75 aa)) constitute a PRC barrel domain.

The protein belongs to the RimM family. As to quaternary structure, binds ribosomal protein uS19.

The protein localises to the cytoplasm. An accessory protein needed during the final step in the assembly of 30S ribosomal subunit, possibly for assembly of the head region. Essential for efficient processing of 16S rRNA. May be needed both before and after RbfA during the maturation of 16S rRNA. It has affinity for free ribosomal 30S subunits but not for 70S ribosomes. This is Ribosome maturation factor RimM from Methylorubrum extorquens (strain PA1) (Methylobacterium extorquens).